The sequence spans 138 residues: Ribosomal RNA large subunit methyltransferase H (138 aa).

Residues L57, G86, and 105–110 (LSPLTF) contribute to the S-adenosyl-L-methionine site.

It belongs to the RNA methyltransferase RlmH family. Homodimer.

It localises to the cytoplasm. The enzyme catalyses pseudouridine(1915) in 23S rRNA + S-adenosyl-L-methionine = N(3)-methylpseudouridine(1915) in 23S rRNA + S-adenosyl-L-homocysteine + H(+). Functionally, specifically methylates the pseudouridine at position 1915 (m3Psi1915) in 23S rRNA. The polypeptide is Ribosomal RNA large subunit methyltransferase H (Prochlorococcus marinus (strain MIT 9312)).